The following is a 1512-amino-acid chain: Non-structural polyprotein 1AB (1512 aa).

A run of 5 helical transmembrane segments spans residues Leu190 to Ala210, Val295 to Ile315, Ala323 to Phe343, Ile360 to Val380, and Ala399 to Thr419. Residues His524, Asp556, and Ser621 each act as charge relay system; for serine protease activity in the active site. Tyr753 is modified (O-(5'-phospho-RNA)-tyrosine). The disordered stretch occupies residues Pro940 to Ala981. The segment covering Val941–Val961 has biased composition (low complexity). A RdRp catalytic domain is found at Thr1257–Asp1390.

Belongs to the astroviridae polyprotein 1AB family. In terms of assembly, monomer. In terms of processing, cleaved by the viral and host proteases. The protease is probably autocatalytically cleaved.

The protein resides in the host membrane. The catalysed reaction is RNA(n) + a ribonucleoside 5'-triphosphate = RNA(n+1) + diphosphate. Functionally, responsible for the cleavage of the polyprotein into functional products. In terms of biological role, protein covalently attached to the 5' extremity of the genomic and subgenomic RNAs. It may serve as a primer for the replicase. In Gallus gallus (Chicken), this protein is Non-structural polyprotein 1AB (ORF1).